The chain runs to 274 residues: 2,3,4,5-tetrahydropyridine-2,6-dicarboxylate N-succinyltransferase (274 aa).

R104 and D141 together coordinate substrate.

Belongs to the transferase hexapeptide repeat family. Homotrimer.

The protein localises to the cytoplasm. It carries out the reaction (S)-2,3,4,5-tetrahydrodipicolinate + succinyl-CoA + H2O = (S)-2-succinylamino-6-oxoheptanedioate + CoA. The protein operates within amino-acid biosynthesis; L-lysine biosynthesis via DAP pathway; LL-2,6-diaminopimelate from (S)-tetrahydrodipicolinate (succinylase route): step 1/3. The polypeptide is 2,3,4,5-tetrahydropyridine-2,6-dicarboxylate N-succinyltransferase (Buchnera aphidicola subsp. Acyrthosiphon pisum (strain APS) (Acyrthosiphon pisum symbiotic bacterium)).